The following is a 263-amino-acid chain: Phosphatidylglycerol--prolipoprotein diacylglyceryl transferase (263 aa).

Transmembrane regions (helical) follow at residues 6–26 (VIFS…VLGI), 50–70 (LLTA…VLIY), 85–105 (TWEG…AVII), and 112–132 (IPIF…LFLG). Arg133 is an a 1,2-diacyl-sn-glycero-3-phospho-(1'-sn-glycerol) binding site. 3 helical membrane-spanning segments follow: residues 169 to 189 (LYEA…LFFL), 197 to 217 (GALT…VEFF), and 233 to 253 (MGQL…LGAL).

It belongs to the Lgt family.

The protein resides in the cell membrane. It catalyses the reaction L-cysteinyl-[prolipoprotein] + a 1,2-diacyl-sn-glycero-3-phospho-(1'-sn-glycerol) = an S-1,2-diacyl-sn-glyceryl-L-cysteinyl-[prolipoprotein] + sn-glycerol 1-phosphate + H(+). The protein operates within protein modification; lipoprotein biosynthesis (diacylglyceryl transfer). Functionally, catalyzes the transfer of the diacylglyceryl group from phosphatidylglycerol to the sulfhydryl group of the N-terminal cysteine of a prolipoprotein, the first step in the formation of mature lipoproteins. The polypeptide is Phosphatidylglycerol--prolipoprotein diacylglyceryl transferase (Wolbachia sp. subsp. Drosophila simulans (strain wRi)).